A 160-amino-acid polypeptide reads, in one-letter code: Cyclic pyranopterin monophosphate synthase (160 aa).

Residues 76 to 78 and 113 to 114 each bind substrate; these read MCH and ME. D128 is an active-site residue.

Belongs to the MoaC family. Homohexamer; trimer of dimers.

It catalyses the reaction (8S)-3',8-cyclo-7,8-dihydroguanosine 5'-triphosphate = cyclic pyranopterin phosphate + diphosphate. Its pathway is cofactor biosynthesis; molybdopterin biosynthesis. Its function is as follows. Catalyzes the conversion of (8S)-3',8-cyclo-7,8-dihydroguanosine 5'-triphosphate to cyclic pyranopterin monophosphate (cPMP). The sequence is that of Cyclic pyranopterin monophosphate synthase from Brevibacillus brevis (strain 47 / JCM 6285 / NBRC 100599).